A 499-amino-acid chain; its full sequence is Probable cytosol aminopeptidase (499 aa).

Residues Lys269 and Asp274 each coordinate Mn(2+). Lys281 is an active-site residue. Asp292, Asp351, and Glu353 together coordinate Mn(2+). Arg355 is a catalytic residue.

It belongs to the peptidase M17 family. Mn(2+) serves as cofactor.

It localises to the cytoplasm. It catalyses the reaction Release of an N-terminal amino acid, Xaa-|-Yaa-, in which Xaa is preferably Leu, but may be other amino acids including Pro although not Arg or Lys, and Yaa may be Pro. Amino acid amides and methyl esters are also readily hydrolyzed, but rates on arylamides are exceedingly low.. The enzyme catalyses Release of an N-terminal amino acid, preferentially leucine, but not glutamic or aspartic acids.. Its function is as follows. Presumably involved in the processing and regular turnover of intracellular proteins. Catalyzes the removal of unsubstituted N-terminal amino acids from various peptides. The protein is Probable cytosol aminopeptidase of Actinobacillus pleuropneumoniae serotype 7 (strain AP76).